A 145-amino-acid chain; its full sequence is MVKVMVVAEVRPSEDVNKVLSAISNFFDFEKMNTRKEGIIDILVLEARTLKSLLKFHRVLRNERILDSARKYLMKGIEGNTIAFMIHKQAAAVGVLSFVDSDKESPLGAIKFYIEYQNPKEIVDWLAPKTAHGVPLWDNPVPPDV.

It belongs to the UPF0201 family.

The chain is UPF0201 protein SSO1042 from Saccharolobus solfataricus (strain ATCC 35092 / DSM 1617 / JCM 11322 / P2) (Sulfolobus solfataricus).